Reading from the N-terminus, the 976-residue chain is DNA-directed RNA polymerase 1, mitochondrial (976 aa).

The transit peptide at 1 to 42 (MWRNILGRASLRKVKFLSDSSSSGTHYPVNRVRGILSSVNLS) directs the protein to the mitochondrion. Catalysis depends on residues Asp677, Lys752, and Asp909.

Belongs to the phage and mitochondrial RNA polymerase family.

Its subcellular location is the mitochondrion. The catalysed reaction is RNA(n) + a ribonucleoside 5'-triphosphate = RNA(n+1) + diphosphate. Its function is as follows. DNA-dependent RNA polymerase catalyzes the transcription of DNA into RNA using the four ribonucleoside triphosphates as substrates. In Arabidopsis thaliana (Mouse-ear cress), this protein is DNA-directed RNA polymerase 1, mitochondrial (RPOT1).